A 128-amino-acid polypeptide reads, in one-letter code: Phycoerythrin alpha-3 chain, chloroplastic (128 aa).

The transit peptide at 1–52 (MFAKTLASLAVIGSAAAYVPMMSMDMGRREVVQAGAAAAAVTPFLSGAPAGA) directs the protein to the chloroplast. At lysine 56 the chain carries 5-hydroxylysine. A disordered region spans residues 70-89 (GCSRAPKESTGGKAGGQDDE). Residues cysteine 71, arginine 73, 77 to 78 (ES), and lysine 93 contribute to the 15,16-dihydrobiliverdin site.

Belongs to the phycoerythrin family. Heterotetramer of 2 different alpha chains and 2 identical beta chains. The subunit composition could comprise of any combination of 2 out of 4 different alpha units with an invariant beta unit. In terms of processing, contains one covalently linked 15,16-dihydrobiliverdin chromophore.

The protein localises to the plastid. The protein resides in the chloroplast thylakoid membrane. Functionally, light-harvesting photosynthetic tetrapyrrole chromophore-protein from the phycobiliprotein complex. This Rhodomonas sp. (strain CS 24) (Chroomonas sp. (strain CS24)) protein is Phycoerythrin alpha-3 chain, chloroplastic (cpeA3).